The sequence spans 597 residues: Putative diflavin flavoprotein A 3 (597 aa).

Positions 59–254 (QRGTTANSYL…YPAQTYAPSH (196 aa)) are zinc metallo-hydrolase. Positions 283–421 (VALIYASAYG…MCEEAGTDFA (139 aa)) constitute a Flavodoxin-like domain. The tract at residues 449 to 597 (LGRLVGSLCV…VHHRKSGDHY (149 aa)) is flavodoxin-reductase-like.

In the N-terminal section; belongs to the zinc metallo-hydrolase group 3 family. The protein in the C-terminal section; belongs to the flavodoxin reductase family. Requires Fe cation as cofactor.

Mediates electron transfer from NADH to oxygen, reducing it to water. This modular protein has 3 redox cofactors, in other organisms the same activity requires 2 or 3 proteins. This Synechocystis sp. (strain ATCC 27184 / PCC 6803 / Kazusa) protein is Putative diflavin flavoprotein A 3 (dfa3).